We begin with the raw amino-acid sequence, 396 residues long: Serine/threonine-protein kinase 32A (396 aa).

G2 is lipidated: N-myristoyl glycine. One can recognise a Protein kinase domain in the interval 23–281 (FEILRAIGKG…LSDVQNFPYM (259 aa)). ATP-binding positions include 29-37 (IGKGSFGKV) and K52. The active-site Proton acceptor is the D146. A disordered region spans residues 373–396 (KRQPNLALEQTKDPQGEDGQNNNL).

Belongs to the protein kinase superfamily. Ser/Thr protein kinase family. Mg(2+) is required as a cofactor.

It is found in the cell membrane. It catalyses the reaction L-seryl-[protein] + ATP = O-phospho-L-seryl-[protein] + ADP + H(+). It carries out the reaction L-threonyl-[protein] + ATP = O-phospho-L-threonyl-[protein] + ADP + H(+). The chain is Serine/threonine-protein kinase 32A (STK32A) from Homo sapiens (Human).